A 274-amino-acid polypeptide reads, in one-letter code: Diaminopimelate epimerase (274 aa).

Substrate is bound by residues N11 and N60. The active-site Proton donor is the C69. Substrate contacts are provided by residues G70 to N71, N191, and E209 to R210. Catalysis depends on C218, which acts as the Proton acceptor. G219–S220 contacts substrate.

This sequence belongs to the diaminopimelate epimerase family. In terms of assembly, homodimer.

The protein resides in the cytoplasm. The enzyme catalyses (2S,6S)-2,6-diaminopimelate = meso-2,6-diaminopimelate. The protein operates within amino-acid biosynthesis; L-lysine biosynthesis via DAP pathway; DL-2,6-diaminopimelate from LL-2,6-diaminopimelate: step 1/1. Its function is as follows. Catalyzes the stereoinversion of LL-2,6-diaminopimelate (L,L-DAP) to meso-diaminopimelate (meso-DAP), a precursor of L-lysine and an essential component of the bacterial peptidoglycan. This is Diaminopimelate epimerase from Caldanaerobacter subterraneus subsp. tengcongensis (strain DSM 15242 / JCM 11007 / NBRC 100824 / MB4) (Thermoanaerobacter tengcongensis).